A 186-amino-acid chain; its full sequence is Inner membrane-spanning protein YciB (186 aa).

Helical transmembrane passes span 10–30 (IILF…AVAI), 47–67 (VEPL…ATLL), 76–96 (WKPT…QLMF), 121–141 (WGWT…AYHF), and 149–169 (FKLF…ALYL).

It belongs to the YciB family.

It is found in the cell inner membrane. Plays a role in cell envelope biogenesis, maintenance of cell envelope integrity and membrane homeostasis. The chain is Inner membrane-spanning protein YciB from Acidovorax ebreus (strain TPSY) (Diaphorobacter sp. (strain TPSY)).